The following is a 703-amino-acid chain: Solute carrier family 28 member 3 (703 aa).

Residues 1-19 (MSRADPGKNSEPSESKMSL) are compositionally biased toward basic and acidic residues. The segment at 1–93 (MSRADPGKNS…DPEDDSEDEH (93 aa)) is disordered. The Cytoplasmic portion of the chain corresponds to 1-117 (MSRADPGKNS…FCRKHRVVLR (117 aa)). The segment covering 44-61 (QNTPGNSTVRNRVVQSGE) has biased composition (polar residues). Residues 63–72 (GHAKQDDRQI) are compositionally biased toward basic and acidic residues. A helical transmembrane segment spans residues 118–138 (STIWAVLLTGFLALVIAACAI). The Extracellular segment spans residues 139-143 (NFHRA). A helical membrane pass occupies residues 144 to 164 (LPLFVITLVTIFFVIWDHLMA). Over 165–188 (KYEQRIDDFLSPGRRLLDRHWFWL) the chain is Cytoplasmic. A helical transmembrane segment spans residues 189 to 209 (KWVVWSSLILAIILWLSLDTA). The Extracellular segment spans residues 210-212 (KLG). The chain crosses the membrane as a helical span at residues 213–234 (QQNLVSFGGLIMYLILLFLFSK). Residues 235–242 (HPTRVYWR) lie on the Cytoplasmic side of the membrane. A helical transmembrane segment spans residues 243-262 (PVFWGIGLQFLLGLLILRTR). Residues 263–299 (PGFVAFDWMGRQVQTFLGYTDTGARFVFGEKYTDHFF) lie on the Extracellular side of the membrane. A helical transmembrane segment spans residues 300 to 320 (AFKILPIVVFFSTVMSMLYYL). Topologically, residues 321–344 (GLMQWIIRKVGWLMLVTMGSSPIE) are cytoplasmic. Residues 345-363 (SVVAAGNIFIGQTESPLLV) constitute an intramembrane region (helical). Over 364–376 (QPYLPHVTKSELH) the chain is Cytoplasmic. Residues 377–399 (TIMTAGFATIAGSVLGAYISFGV) traverse the membrane as a helical segment. Residues 400-401 (SS) are Extracellular-facing. A helical membrane pass occupies residues 402-423 (THLLTASVMSAPAALAVAKLFW). At 424–458 (PETEKPKITLKSAMKMENGDSRNLLEAASQGASSS) the chain is on the cytoplasmic side. Residues 459–484 (IPLVANIAANLIAFLALLSFVNSALS) traverse the membrane as a helical segment. Residues 485 to 522 (WFGSMFNYPELSFELICSYIFMPFSFMMGVDWQDSFMV) lie on the Extracellular side of the membrane. Residues 523–542 (AKLIGYKTFFNEFVAYDHLS) constitute an intramembrane region (helical). At 543–581 (KLINLRKAAGPKFVNGVQQYMSIRSETIATYALCGFANF) the chain is on the extracellular side. A helical membrane pass occupies residues 582 to 592 (GSLGIVIGGLT). Over 593 to 605 (SIAPSRKRDIASG) the chain is Cytoplasmic. Residues 606–628 (AMRALIAGTIACFMTACIAGILS) form a helical membrane-spanning segment. Residues 629-703 (DTPVDINCHH…LNCNWIPNKL (75 aa)) lie on the Extracellular side of the membrane.

The protein belongs to the concentrative nucleoside transporter (CNT) (TC 2.A.41) family. In terms of assembly, homotrimer.

The protein localises to the cell membrane. The catalysed reaction is thymidine(out) + 2 Na(+)(out) = thymidine(in) + 2 Na(+)(in). It carries out the reaction cytidine(out) + 2 Na(+)(out) = cytidine(in) + 2 Na(+)(in). It catalyses the reaction uridine(out) + 2 Na(+)(out) = uridine(in) + 2 Na(+)(in). The enzyme catalyses adenosine(out) + 2 Na(+)(out) = adenosine(in) + 2 Na(+)(in). The catalysed reaction is guanosine(out) + 2 Na(+)(out) = guanosine(in) + 2 Na(+)(in). It carries out the reaction inosine(out) + 2 Na(+)(out) = inosine(in) + 2 Na(+)(in). Functionally, sodium-dependent, pyrimidine- and purine-selective. Involved in the homeostasis of endogenous nucleosides. Exhibits the transport characteristics of the nucleoside transport system cib or N3 subtype (N3/cib) (with marked transport of both thymidine and inosine). Employs a 2:1 sodium/nucleoside ratio. Also able to transport gemcitabine, 3'-azido-3'-deoxythymidine (AZT), ribavirin and 3-deazauridine. The polypeptide is Solute carrier family 28 member 3 (Slc28a3) (Mus musculus (Mouse)).